A 505-amino-acid chain; its full sequence is Histidine ammonia-lyase (505 aa).

Residues 141-143 constitute a cross-link (5-imidazolinone (Ala-Gly)); the sequence is ASG. Ser-142 bears the 2,3-didehydroalanine (Ser) mark.

Belongs to the PAL/histidase family. Contains an active site 4-methylidene-imidazol-5-one (MIO), which is formed autocatalytically by cyclization and dehydration of residues Ala-Ser-Gly.

The protein resides in the cytoplasm. The enzyme catalyses L-histidine = trans-urocanate + NH4(+). It functions in the pathway amino-acid degradation; L-histidine degradation into L-glutamate; N-formimidoyl-L-glutamate from L-histidine: step 1/3. The polypeptide is Histidine ammonia-lyase (Bacillus thuringiensis subsp. konkukian (strain 97-27)).